Reading from the N-terminus, the 268-residue chain is Protein atz-1 (268 aa).

Residues 171–243 (VDDANKLTEV…EEGEEDYEEE (73 aa)) adopt a coiled-coil conformation. The segment at 229-268 (DLMKEEEGEEDYEEEENYEVEEDFEDEEEYDEEGEEEDYE) is disordered. A compositionally biased stretch (acidic residues) spans 231 to 268 (MKEEEGEEDYEEEENYEVEEDFEDEEEYDEEGEEEDYE).

The protein resides in the nucleus. In terms of biological role, plays a role in meiosis, germline development and oocyte morphogenesis. May play a role in DNA replication. In the germline, involved in the maintenance of transition zone nuclei and in chromosome structure and organization, but not required for mitotic proliferation. The polypeptide is Protein atz-1 (Caenorhabditis elegans).